The following is a 68-amino-acid chain: Ribosome modulation factor (68 aa).

Belongs to the ribosome modulation factor family.

It localises to the cytoplasm. Its function is as follows. During stationary phase, converts 70S ribosomes to an inactive dimeric form (100S ribosomes). The chain is Ribosome modulation factor from Alcanivorax borkumensis (strain ATCC 700651 / DSM 11573 / NCIMB 13689 / SK2).